Here is a 360-residue protein sequence, read N- to C-terminus: Phospho-N-acetylmuramoyl-pentapeptide-transferase (360 aa).

The next 10 membrane-spanning stretches (helical) occupy residues 26–46, 74–94, 97–117, 134–154, 168–188, 199–219, 236–256, 263–283, 288–308, and 338–358; these read AILGLLTALMFSLWWGPKLIE, MGGLLILGAIFLSVLLWGDLG, YVWVMLFVLGSFGMIGFIDDY, YILQSLAALIIAFFLYTTAAN, VMPQLGAVFIVLAYFTIVGSS, GLAIMPTVMVAAAFALIAYLS, SGELVIVCTAIVGAGLGFLWF, VFMGDVGSLSLGAALGAIAVL, ILLVIMGGVFVMETVSVILQV, and VIVRFWIISIFLVLLGLATLK.

It belongs to the glycosyltransferase 4 family. MraY subfamily. Requires Mg(2+) as cofactor.

The protein resides in the cell inner membrane. The enzyme catalyses UDP-N-acetyl-alpha-D-muramoyl-L-alanyl-gamma-D-glutamyl-meso-2,6-diaminopimeloyl-D-alanyl-D-alanine + di-trans,octa-cis-undecaprenyl phosphate = di-trans,octa-cis-undecaprenyl diphospho-N-acetyl-alpha-D-muramoyl-L-alanyl-D-glutamyl-meso-2,6-diaminopimeloyl-D-alanyl-D-alanine + UMP. It functions in the pathway cell wall biogenesis; peptidoglycan biosynthesis. In terms of biological role, catalyzes the initial step of the lipid cycle reactions in the biosynthesis of the cell wall peptidoglycan: transfers peptidoglycan precursor phospho-MurNAc-pentapeptide from UDP-MurNAc-pentapeptide onto the lipid carrier undecaprenyl phosphate, yielding undecaprenyl-pyrophosphoryl-MurNAc-pentapeptide, known as lipid I. The polypeptide is Phospho-N-acetylmuramoyl-pentapeptide-transferase (Shewanella oneidensis (strain ATCC 700550 / JCM 31522 / CIP 106686 / LMG 19005 / NCIMB 14063 / MR-1)).